Consider the following 136-residue polypeptide: Ribonuclease P protein component (136 aa).

It belongs to the RnpA family. As to quaternary structure, consists of a catalytic RNA component (M1 or rnpB) and a protein subunit.

The enzyme catalyses Endonucleolytic cleavage of RNA, removing 5'-extranucleotides from tRNA precursor.. Its function is as follows. RNaseP catalyzes the removal of the 5'-leader sequence from pre-tRNA to produce the mature 5'-terminus. It can also cleave other RNA substrates such as 4.5S RNA. The protein component plays an auxiliary but essential role in vivo by binding to the 5'-leader sequence and broadening the substrate specificity of the ribozyme. The polypeptide is Ribonuclease P protein component (Burkholderia mallei (strain NCTC 10247)).